We begin with the raw amino-acid sequence, 409 residues long: uncharacterized protein (409 aa).

4 helical membrane passes run 20–40 (ILTMLGVIIGIAAIIAIVSML), 283–303 (FALLLGGIASISLLVGGIGVM), 344–364 (IGGILGVLAGFGIAKLLTVIF), and 372–392 (IPAVVGALIFSMAVGIIFGLL).

This sequence belongs to the ABC-4 integral membrane protein family.

The protein resides in the cell membrane. This is an uncharacterized protein from Bacillus subtilis (strain 168).